The chain runs to 491 residues: Probable protein phosphatase 2C 52 (491 aa).

Residues 1-11 show a composition bias toward basic and acidic residues; that stretch reads MVYDGAVKDQE. The interval 1 to 211 is disordered; sequence MVYDGAVKDQ…REREKERERV (211 aa). Residues 12–54 are compositionally biased toward low complexity; the sequence is SSANPASASAALSEASAAASEVTAAAAAGAGAGAAEEGAAVSG. Residues 66-78 are compositionally biased toward basic residues; sequence GVRHPLKHRRFRA. Over residues 95–105 the composition is skewed to acidic residues; that stretch reads VADEEASEVEQ. A compositionally biased stretch (basic and acidic residues) spans 187–211; it reads VEEKKHKDQENKHKEREREKERERV. One can recognise a PPM-type phosphatase domain in the interval 229-475; sequence SCGYSSFRGK…DNITCIVVKF (247 aa). The Mn(2+) site is built by Asp-265, Gly-266, Asp-427, and Asp-466.

This sequence belongs to the PP2C family. Mg(2+) is required as a cofactor. Mn(2+) serves as cofactor.

The catalysed reaction is O-phospho-L-seryl-[protein] + H2O = L-seryl-[protein] + phosphate. The enzyme catalyses O-phospho-L-threonyl-[protein] + H2O = L-threonyl-[protein] + phosphate. The sequence is that of Probable protein phosphatase 2C 52 from Oryza sativa subsp. japonica (Rice).